A 577-amino-acid polypeptide reads, in one-letter code: Efflux pump notK' (577 aa).

Asn62 and Asn84 each carry an N-linked (GlcNAc...) asparagine glycan. A run of 5 helical transmembrane segments spans residues 104 to 124 (AAIA…PVAL), 151 to 171 (LAVT…MLGI), 189 to 209 (AGIG…LGLV), 241 to 261 (NPTM…LMMY), and 265 to 285 (GAVI…TTPV). A glycan (N-linked (GlcNAc...) asparagine) is linked at Asn320. Helical transmembrane passes span 328–348 (FGLA…GTLY), 373–393 (VDAI…TAFV), 413–433 (GICF…PPWA), 434–454 (TGST…EINW), and 476–496 (IADG…GVWV). The segment covering 555-566 (MPPNGSMSSGSP) has biased composition (low complexity). The disordered stretch occupies residues 555–577 (MPPNGSMSSGSPEQVAEKAVGKY). Asn558 is a glycosylation site (N-linked (GlcNAc...) asparagine).

The protein belongs to the nucleobase:cation symporter-2 (NCS2) (TC 2.A.40) family. Azg-like subfamily.

It is found in the cell membrane. Functionally, efflux pump; part of the gene cluster that mediates the biosynthesis of notoamide, a fungal indole alkaloid that belongs to a family of natural products containing a characteristic bicyclo[2.2.2]diazaoctane core. The polypeptide is Efflux pump notK' (Aspergillus versicolor).